The following is a 137-amino-acid chain: Small ribosomal subunit protein uS12 (137 aa).

2 disordered regions span residues 1–21 (MPTI…KSDS) and 34–57 (VHTK…TPKK). Asp-102 is subject to 3-methylthioaspartic acid.

It belongs to the universal ribosomal protein uS12 family. As to quaternary structure, part of the 30S ribosomal subunit. Contacts proteins S8 and S17. May interact with IF1 in the 30S initiation complex.

In terms of biological role, with S4 and S5 plays an important role in translational accuracy. Its function is as follows. Interacts with and stabilizes bases of the 16S rRNA that are involved in tRNA selection in the A site and with the mRNA backbone. Located at the interface of the 30S and 50S subunits, it traverses the body of the 30S subunit contacting proteins on the other side and probably holding the rRNA structure together. The combined cluster of proteins S8, S12 and S17 appears to hold together the shoulder and platform of the 30S subunit. The protein is Small ribosomal subunit protein uS12 of Streptococcus uberis (strain ATCC BAA-854 / 0140J).